We begin with the raw amino-acid sequence, 158 residues long: MAKVESFTLDHTKVKAPYVRLITVEEGAKGDKISNYDLRLVQPNENAIPTAGLHTIEHLLAGLLRDRLDGVIDCSPFGCRTGFHLITWGEHSTTEVAKALKSSLEEIAYKTKWEDVQGTTIESCGNYRDHSLFSAKEWSKKILDEGISDKPFERHVVD.

Positions 54, 58, and 124 each coordinate Fe cation.

It belongs to the LuxS family. Homodimer. Requires Fe cation as cofactor.

It catalyses the reaction S-(5-deoxy-D-ribos-5-yl)-L-homocysteine = (S)-4,5-dihydroxypentane-2,3-dione + L-homocysteine. Functionally, involved in the synthesis of autoinducer 2 (AI-2) which is secreted by bacteria and is used to communicate both the cell density and the metabolic potential of the environment. The regulation of gene expression in response to changes in cell density is called quorum sensing. Catalyzes the transformation of S-ribosylhomocysteine (RHC) to homocysteine (HC) and 4,5-dihydroxy-2,3-pentadione (DPD). This Limosilactobacillus reuteri (Lactobacillus reuteri) protein is S-ribosylhomocysteine lyase.